We begin with the raw amino-acid sequence, 238 residues long: Sugar fermentation stimulation protein homolog (238 aa).

Belongs to the SfsA family.

The protein is Sugar fermentation stimulation protein homolog of Klebsiella pneumoniae (strain 342).